Here is an 847-residue protein sequence, read N- to C-terminus: Protein translocase subunit SecA (847 aa).

ATP contacts are provided by residues Gln-87, 105–109 (GEGKT), and Asp-495. Residues 828–847 (SSNSPSDARNRPIEHDDNAV) form a disordered region. Over residues 835–847 (ARNRPIEHDDNAV) the composition is skewed to basic and acidic residues.

This sequence belongs to the SecA family. Monomer and homodimer. Part of the essential Sec protein translocation apparatus which comprises SecA, SecYEG and auxiliary proteins SecDF. Other proteins may also be involved.

It localises to the cell membrane. The protein localises to the cytoplasm. The enzyme catalyses ATP + H2O + cellular proteinSide 1 = ADP + phosphate + cellular proteinSide 2.. Part of the Sec protein translocase complex. Interacts with the SecYEG preprotein conducting channel. Has a central role in coupling the hydrolysis of ATP to the transfer of proteins into and across the cell membrane, serving as an ATP-driven molecular motor driving the stepwise translocation of polypeptide chains across the membrane. This Tropheryma whipplei (strain TW08/27) (Whipple's bacillus) protein is Protein translocase subunit SecA.